A 334-amino-acid polypeptide reads, in one-letter code: 3-dehydroquinate synthase (334 aa).

It belongs to the archaeal-type DHQ synthase family.

The catalysed reaction is 2-amino-2,3,7-trideoxy-D-lyxo-hept-6-ulosonate + NAD(+) + H2O = 3-dehydroquinate + NH4(+) + NADH + H(+). In terms of biological role, catalyzes the oxidative deamination and cyclization of 2-amino-3,7-dideoxy-D-threo-hept-6-ulosonic acid (ADH) to yield 3-dehydroquinate (DHQ), which is fed into the canonical shikimic pathway of aromatic amino acid biosynthesis. The sequence is that of 3-dehydroquinate synthase from Korarchaeum cryptofilum (strain OPF8).